Consider the following 462-residue polypeptide: Light-independent protochlorophyllide reductase subunit N (462 aa).

Residues C24, C49, and C109 each coordinate [4Fe-4S] cluster.

This sequence belongs to the BchN/ChlN family. Protochlorophyllide reductase is composed of three subunits; ChlL, ChlN and ChlB. Forms a heterotetramer of two ChlB and two ChlN subunits. It depends on [4Fe-4S] cluster as a cofactor.

It localises to the plastid. The protein resides in the chloroplast. It catalyses the reaction chlorophyllide a + oxidized 2[4Fe-4S]-[ferredoxin] + 2 ADP + 2 phosphate = protochlorophyllide a + reduced 2[4Fe-4S]-[ferredoxin] + 2 ATP + 2 H2O. It functions in the pathway porphyrin-containing compound metabolism; chlorophyll biosynthesis (light-independent). Its function is as follows. Component of the dark-operative protochlorophyllide reductase (DPOR) that uses Mg-ATP and reduced ferredoxin to reduce ring D of protochlorophyllide (Pchlide) to form chlorophyllide a (Chlide). This reaction is light-independent. The NB-protein (ChlN-ChlB) is the catalytic component of the complex. The protein is Light-independent protochlorophyllide reductase subunit N of Pleurastrum terricola (Filamentous green alga).